The following is a 188-amino-acid chain: PRA1 family protein 3 (188 aa).

N-acetylmethionine is present on M1. At M1–R35 the chain is on the cytoplasmic side. 2 consecutive transmembrane segments (helical) span residues V36–S56 and V57–F77. Residues T78–R92 are Cytoplasmic-facing. 2 helical membrane passes run M93 to I113 and M115 to I135. The required for homodimer formation and heterodimer formation with ARL6IP1 stretch occupies residues M103–G117. The Cytoplasmic portion of the chain corresponds to H136–E188. A targeting to endoplasmic reticulum membrane region spans residues H136–E188.

The protein belongs to the PRA1 family. As to quaternary structure, homodimer. Heterodimer with ARL6IP1. Forms multimers. Interacts with ARL6. Interacts with prenylated RAB1A and RAB3A. Interacts with SLC1A1/EAAC1. Interacts with RTN2 (via first transmembrane domain). Does not interact with VAMP1, VAMP2 or VAMP3. As to expression, ubiquitous. Most abundant in heart and brain. In the embryonic brain cortex, expressed in neurons and astrocytes.

The protein localises to the endoplasmic reticulum membrane. The protein resides in the cell membrane. Its subcellular location is the cytoplasm. It is found in the cytoskeleton. Its function is as follows. Regulates intracellular concentrations of taurine and glutamate. Negatively modulates SLC1A1/EAAC1 glutamate transport activity by decreasing its affinity for glutamate in a PKC activity-dependent manner. Plays a role in the retention of SLC1A1/EAAC1 in the endoplasmic reticulum. This is PRA1 family protein 3 (Arl6ip5) from Rattus norvegicus (Rat).